Reading from the N-terminus, the 343-residue chain is Methionine import ATP-binding protein MetN 1 (343 aa).

Positions 2–241 (IKLSNITKVF…PKTPLAQKFI (240 aa)) constitute an ABC transporter domain. Residue 38–45 (GASGAGKS) participates in ATP binding.

The protein belongs to the ABC transporter superfamily. Methionine importer (TC 3.A.1.24) family. In terms of assembly, the complex is composed of two ATP-binding proteins (MetN), two transmembrane proteins (MetI) and a solute-binding protein (MetQ).

Its subcellular location is the cell inner membrane. It carries out the reaction L-methionine(out) + ATP + H2O = L-methionine(in) + ADP + phosphate + H(+). The catalysed reaction is D-methionine(out) + ATP + H2O = D-methionine(in) + ADP + phosphate + H(+). Its function is as follows. Part of the ABC transporter complex MetNIQ involved in methionine import. Responsible for energy coupling to the transport system. The chain is Methionine import ATP-binding protein MetN 1 from Salmonella paratyphi A (strain ATCC 9150 / SARB42).